Here is a 331-residue protein sequence, read N- to C-terminus: MKNIKTSPYIPTDISIQEIGKNKIKISAYPFESGYAITLAHPLRRLLLGSSVGFAPTALKIEGAAHEFDSVRGIMEDVALFIVNLKSIRFKMRGDAERVTLDYSFKGPATIKGSDLVNDYVDVVTPNQHLATINEDATLTFSLIVQKGIGYVPSEETRNLIPEGYIPLDAYFTPVKKATYEIENVLVEDNPTYEKIVLEIETDGLIEPIAAFKDALGVMQKQMSVFNSEWSVSSAESTSSDEEDPELKPLLQKIEALNLSARSFNCLDRAGMKFVGELVLLGENELKEVKNLGKKSFDEIKDKLEEIGYPVGSDLAEEVSSALQKRLNKLK.

Residues 1–230 (MKNIKTSPYI…KQMSVFNSEW (230 aa)) form an alpha N-terminal domain (alpha-NTD) region. The alpha C-terminal domain (alpha-CTD) stretch occupies residues 247-331 (LKPLLQKIEA…ALQKRLNKLK (85 aa)).

The protein belongs to the RNA polymerase alpha chain family. As to quaternary structure, homodimer. The RNAP catalytic core consists of 2 alpha, 1 beta/beta' and 1 omega subunit. When a sigma factor is associated with the core the holoenzyme is formed, which can initiate transcription.

It catalyses the reaction RNA(n) + a ribonucleoside 5'-triphosphate = RNA(n+1) + diphosphate. Functionally, DNA-dependent RNA polymerase catalyzes the transcription of DNA into RNA using the four ribonucleoside triphosphates as substrates. The sequence is that of DNA-directed RNA polymerase subunit alpha from Wolinella succinogenes (strain ATCC 29543 / DSM 1740 / CCUG 13145 / JCM 31913 / LMG 7466 / NCTC 11488 / FDC 602W) (Vibrio succinogenes).